A 601-amino-acid polypeptide reads, in one-letter code: DnaJ-like protein MG200 (601 aa).

In terms of domain architecture, J spans 5–77 (KRDYYEVLGI…DKYGFDGVDG (73 aa)). Disordered stretches follow at residues 143 to 163 (VQQNQNQNKDPDELRSKVPGE) and 205 to 272 (VDSE…EPIP). Basic and acidic residues predominate over residues 151–160 (KDPDELRSKV). The span at 263–272 (EPTPIPEPIP) shows a compositional bias: pro residues.

The polypeptide is DnaJ-like protein MG200 (Mycoplasma genitalium (strain ATCC 33530 / DSM 19775 / NCTC 10195 / G37) (Mycoplasmoides genitalium)).